The following is a 449-amino-acid chain: tRNA(Ile)-lysidine synthase (449 aa).

An ATP-binding site is contributed by 35 to 40 (SGGIDS).

It belongs to the tRNA(Ile)-lysidine synthase family.

The protein localises to the cytoplasm. The enzyme catalyses cytidine(34) in tRNA(Ile2) + L-lysine + ATP = lysidine(34) in tRNA(Ile2) + AMP + diphosphate + H(+). Ligates lysine onto the cytidine present at position 34 of the AUA codon-specific tRNA(Ile) that contains the anticodon CAU, in an ATP-dependent manner. Cytidine is converted to lysidine, thus changing the amino acid specificity of the tRNA from methionine to isoleucine. The protein is tRNA(Ile)-lysidine synthase of Coxiella burnetii (strain RSA 493 / Nine Mile phase I).